Reading from the N-terminus, the 188-residue chain is Putative manganese efflux pump MntP (188 aa).

Transmembrane regions (helical) follow at residues 2-22, 39-59, 67-87, 107-127, 129-149, and 166-186; these read IMGN…AFAV, LITG…GFLL, ITAI…LNMI, IILS…FAFL, VDIV…SFLG, and LAGG…HLGF.

This sequence belongs to the MntP (TC 9.B.29) family.

The protein resides in the cell membrane. Functionally, probably functions as a manganese efflux pump. The chain is Putative manganese efflux pump MntP from Desulfitobacterium hafniense (strain Y51).